A 121-amino-acid polypeptide reads, in one-letter code: Autophagy-related protein 8 (121 aa).

Gly116 is lipidated: Phosphatidylethanolamine amidated glycine. The propeptide at 117–121 (DFETA) is removed in mature form.

Belongs to the ATG8 family. The C-terminal 5 residues are removed to expose Gly-116 at the C-terminus. The C-terminal Gly is then amidated with phosphatidylethanolamine by an activating system similar to that for ubiquitin.

The protein localises to the cytoplasmic vesicle. It is found in the autophagosome membrane. The protein resides in the vacuole membrane. In terms of biological role, ubiquitin-like modifier involved in autophagosome formation. With cpr-1/atg4, mediates the delivery of the autophagosomes to the vacuole via the microtubule cytoskeleton. Required for selective autophagic degradation of the nucleus (nucleophagy) as well as for mitophagy which contributes to regulate mitochondrial quantity and quality by eliminating the mitochondria to a basal level to fulfill cellular energy requirements and preventing excess ROS production. Also participates in membrane fusion events that take place in the early secretory pathway. Also involved in endoplasmic reticulum-specific autophagic process and is essential for the survival of cells subjected to severe ER stress. The apg-6/atg8-PE conjugate mediates tethering between adjacent membranes and stimulates membrane hemifusion, leading to expansion of the autophagosomal membrane during autophagy. This Neurospora crassa (strain ATCC 24698 / 74-OR23-1A / CBS 708.71 / DSM 1257 / FGSC 987) protein is Autophagy-related protein 8 (apg-6).